The sequence spans 194 residues: Aminodeoxychorismate/anthranilate synthase component 2 (194 aa).

The Glutamine amidotransferase type-1 domain maps to 1–194; sequence MILMIDNYDS…IETYRKEVIA (194 aa). Active-site residues include cysteine 79, histidine 168, and glutamate 170.

Monomer. Heterodimer consisting of two non-identical subunits: a glutamine amidotransferase subunit (PabA) and a aminodeoxychorismate synthase subunit (PabB).

The enzyme catalyses chorismate + L-glutamine = anthranilate + pyruvate + L-glutamate + H(+). The catalysed reaction is chorismate + L-glutamine = 4-amino-4-deoxychorismate + L-glutamate. The protein operates within amino-acid biosynthesis; L-tryptophan biosynthesis; L-tryptophan from chorismate: step 1/5. It functions in the pathway cofactor biosynthesis; tetrahydrofolate biosynthesis; 4-aminobenzoate from chorismate: step 1/2. Its function is as follows. Part of a heterodimeric complex that catalyzes the two-step biosynthesis of 4-amino-4-deoxychorismate (ADC), a precursor of p-aminobenzoate (PABA) and tetrahydrofolate. In the first step, a glutamine amidotransferase (PabA) generates ammonia as a substrate that, along with chorismate, is used in the second step, catalyzed by aminodeoxychorismate synthase (PabB) to produce ADC. PabA converts glutamine into glutamate only in the presence of stoichiometric amounts of PabB. Also involved in the biosynthesis of anthranilate. Complements a glutamine amidotransferase-negative mutant. The polypeptide is Aminodeoxychorismate/anthranilate synthase component 2 (Bacillus subtilis (strain 168)).